Reading from the N-terminus, the 95-residue chain is Large ribosomal subunit protein bL25 (95 aa).

Belongs to the bacterial ribosomal protein bL25 family. Part of the 50S ribosomal subunit; part of the 5S rRNA/L5/L18/L25 subcomplex. Contacts the 5S rRNA. Binds to the 5S rRNA independently of L5 and L18.

Its function is as follows. This is one of the proteins that binds to the 5S RNA in the ribosome where it forms part of the central protuberance. The chain is Large ribosomal subunit protein bL25 from Shewanella piezotolerans (strain WP3 / JCM 13877).